A 463-amino-acid chain; its full sequence is Chromosomal replication initiator protein DnaA (463 aa).

A domain I, interacts with DnaA modulators region spans residues 1-90 (MSLSLWQQCL…KPLSQIISQT (90 aa)). Residues 91–126 (VTASVSAPSAPIVRVAAPSRPSWDNAAPQPELSYRS) are domain II. A domain III, AAA+ region region spans residues 127 to 343 (NVNPKHTFDN…GALNRVIANA (217 aa)). ATP contacts are provided by Gly-171, Gly-173, Lys-174, and Thr-175. The interval 344–463 (NFTGRAITID…FSNLIRTLSS (120 aa)) is domain IV, binds dsDNA.

Belongs to the DnaA family. In terms of assembly, oligomerizes as a right-handed, spiral filament on DNA at oriC.

It is found in the cytoplasm. In terms of biological role, plays an essential role in the initiation and regulation of chromosomal replication. ATP-DnaA binds to the origin of replication (oriC) to initiate formation of the DNA replication initiation complex once per cell cycle. Binds the DnaA box (a 9 base pair repeat at the origin) and separates the double-stranded (ds)DNA. Forms a right-handed helical filament on oriC DNA; dsDNA binds to the exterior of the filament while single-stranded (ss)DNA is stabiized in the filament's interior. The ATP-DnaA-oriC complex binds and stabilizes one strand of the AT-rich DNA unwinding element (DUE), permitting loading of DNA polymerase. After initiation quickly degrades to an ADP-DnaA complex that is not apt for DNA replication. Binds acidic phospholipids. The sequence is that of Chromosomal replication initiator protein DnaA from Serratia proteamaculans (strain 568).